Consider the following 611-residue polypeptide: Elongation factor 4 (611 aa).

The tr-type G domain maps to 11-193; that stretch reads KHIRNFSIVA…KIVKDVPAPT (183 aa). Residues 23-28 and 140-143 contribute to the GTP site; these read DHGKST and NKID.

The protein belongs to the TRAFAC class translation factor GTPase superfamily. Classic translation factor GTPase family. LepA subfamily.

It is found in the cell membrane. It carries out the reaction GTP + H2O = GDP + phosphate + H(+). Required for accurate and efficient protein synthesis under certain stress conditions. May act as a fidelity factor of the translation reaction, by catalyzing a one-codon backward translocation of tRNAs on improperly translocated ribosomes. Back-translocation proceeds from a post-translocation (POST) complex to a pre-translocation (PRE) complex, thus giving elongation factor G a second chance to translocate the tRNAs correctly. Binds to ribosomes in a GTP-dependent manner. This is Elongation factor 4 from Limosilactobacillus reuteri (strain DSM 20016) (Lactobacillus reuteri).